The primary structure comprises 355 residues: Glucose-6-phosphatase 2 (355 aa).

Over 1 to 24 the chain is Lumenal; the sequence is MDFLHRNGVLIIQHLQKDYRAYYT. A helical transmembrane segment spans residues 25–45; the sequence is FLNFMSNVGDPRNIFFIYFPL. Residues 46–56 are Cytoplasmic-facing; sequence CFQFNQTVGTK. A helical membrane pass occupies residues 57-77; sequence MIWVAVIGDWLNLIFKWILFG. At 78-115 the chain is on the lumenal side; sequence HRPYWWVQETQIYPNHSSPCLEQFPTTCETGPGSPSGH. Substrate is bound at residue R79. A glycan (N-linked (GlcNAc...) asparagine) is linked at N92. H115 serves as the catalytic Proton donor. A helical transmembrane segment spans residues 116-136; the sequence is AMGASCVWYVMVTAALSHTVC. Over 137-146 the chain is Cytoplasmic; that stretch reads GMDKFSITLH. Residues 147–167 form a helical membrane-spanning segment; sequence RLTWSFLWSVFWLIQISVCIS. Residue R168 is a topological domain, lumenal. R168 provides a ligand contact to substrate. A helical membrane pass occupies residues 169 to 189; the sequence is VFIATHFPHQVILGVIGGMLV. Residue H174 is the Nucleophile of the active site. Topologically, residues 190 to 211 are cytoplasmic; sequence AEAFEHTPGIQTASLGTYLKTN. The chain crosses the membrane as a helical span at residues 212–232; the sequence is LFLFLFAVGFYLLLRVLNIDL. The Lumenal portion of the chain corresponds to 233-261; the sequence is LWSVPIAKKWCANPDWIHIDTTPFAGLVR. A helical transmembrane segment spans residues 262–282; sequence NLGVLFGLGFAINSEMFLLSC. Over 283 to 293 the chain is Cytoplasmic; sequence RGGNNYTLSFR. Residues 294-314 form a helical membrane-spanning segment; it reads LLCALTSLTILQLYHFLQIPT. At 315-318 the chain is on the lumenal side; sequence HEEH. The helical transmembrane segment at 319 to 339 threads the bilayer; that stretch reads LFYVLSFCKSASIPLTVVAFI. Residues 340-355 lie on the Cytoplasmic side of the membrane; sequence PYSVHMLMKQSGKKSQ. Residues 352–355 carry the Prevents secretion from ER motif; it reads KKSQ.

Belongs to the glucose-6-phosphatase family. Post-translationally, N-glycosylated; the non-glycosylated form is more unstable and is degraded through the proteasome. In terms of tissue distribution, specifically expressed in pancreas and also detected to a lower extent in testis. Expressed by most islet cells in the pancreas (at protein level).

Its subcellular location is the endoplasmic reticulum membrane. It catalyses the reaction D-glucose 6-phosphate + H2O = D-glucose + phosphate. It participates in carbohydrate biosynthesis; gluconeogenesis. Functionally, may hydrolyze glucose-6-phosphate to glucose in the endoplasmic reticulum. May be responsible for glucose production through glycogenolysis and gluconeogenesis. This Homo sapiens (Human) protein is Glucose-6-phosphatase 2 (G6PC2).